The chain runs to 281 residues: Putative dehydrogenase/reductase SDR family member 4-like 1 (281 aa).

36-60 (LVTASTDWIGFAVAQRLAQDGAHVV) is a binding site for NADP(+). Ser172 provides a ligand contact to substrate. Tyr185 acts as the Proton acceptor in catalysis. Lys189 serves as a coordination point for NADP(+). The Peroxisomal targeting signal motif lies at 279–281 (SRL).

The protein belongs to the short-chain dehydrogenases/reductases (SDR) family.

Functionally, putative oxidoreductase. This chain is Putative dehydrogenase/reductase SDR family member 4-like 1, found in Homo sapiens (Human).